Reading from the N-terminus, the 322-residue chain is Ribosomal RNA small subunit methyltransferase H (322 aa).

S-adenosyl-L-methionine contacts are provided by residues 40–42 (GGH), D60, F84, D106, and Q113.

The protein belongs to the methyltransferase superfamily. RsmH family.

Its subcellular location is the cytoplasm. The catalysed reaction is cytidine(1402) in 16S rRNA + S-adenosyl-L-methionine = N(4)-methylcytidine(1402) in 16S rRNA + S-adenosyl-L-homocysteine + H(+). Its function is as follows. Specifically methylates the N4 position of cytidine in position 1402 (C1402) of 16S rRNA. This Aggregatibacter aphrophilus (strain NJ8700) (Haemophilus aphrophilus) protein is Ribosomal RNA small subunit methyltransferase H.